The chain runs to 88 residues: Small ribosomal subunit protein uS17 (88 aa).

It belongs to the universal ribosomal protein uS17 family. As to quaternary structure, part of the 30S ribosomal subunit.

Its function is as follows. One of the primary rRNA binding proteins, it binds specifically to the 5'-end of 16S ribosomal RNA. This Prochlorococcus marinus (strain MIT 9215) protein is Small ribosomal subunit protein uS17.